Here is a 115-residue protein sequence, read N- to C-terminus: Large ribosomal subunit protein uL22 (115 aa).

Belongs to the universal ribosomal protein uL22 family. As to quaternary structure, part of the 50S ribosomal subunit.

Its function is as follows. This protein binds specifically to 23S rRNA; its binding is stimulated by other ribosomal proteins, e.g. L4, L17, and L20. It is important during the early stages of 50S assembly. It makes multiple contacts with different domains of the 23S rRNA in the assembled 50S subunit and ribosome. The globular domain of the protein is located near the polypeptide exit tunnel on the outside of the subunit, while an extended beta-hairpin is found that lines the wall of the exit tunnel in the center of the 70S ribosome. This is Large ribosomal subunit protein uL22 from Endomicrobium trichonymphae.